We begin with the raw amino-acid sequence, 201 residues long: Small ribosomal subunit protein uS4c (201 aa).

A disordered region spans residues 15–43 (LGALPGLTNKRPRAGSDLRNQSRSGKRSQ). The region spanning 89–149 (MRLDNILFRL…DEQKSIALIQ (61 aa)) is the S4 RNA-binding domain.

As to quaternary structure, component of the chloroplast small ribosomal subunit (SSU). Mature 70S chloroplast ribosomes of higher plants consist of a small (30S) and a large (50S) subunit. The 30S small subunit contains 1 molecule of ribosomal RNA (16S rRNA) and 24 different proteins. The 50S large subunit contains 3 rRNA molecules (23S, 5S and 4.5S rRNA) and 33 different proteins.

It localises to the plastid. The protein resides in the chloroplast. Functionally, component of the chloroplast ribosome (chloro-ribosome), a dedicated translation machinery responsible for the synthesis of chloroplast genome-encoded proteins, including proteins of the transcription and translation machinery and components of the photosynthetic apparatus. In Spinacia oleracea (Spinach), this protein is Small ribosomal subunit protein uS4c (rps4).